The following is a 125-amino-acid chain: Calcitonin receptor-stimulating peptide 2 (125 aa).

The N-terminal stretch at 1–25 is a signal peptide; that stretch reads MGFWKFLPFLVLSFLVVYQAGMFQA. A propeptide spanning residues 26–77 is cleaved from the precursor; that stretch reads APFRSALENDFDPAILTEKEMCLLLAAVMNDYVQMKTSELKQEAEHFHITAQ. Residues C81 and C86 are joined by a disulfide bond.

This sequence belongs to the calcitonin family.

It is found in the secreted. This is Calcitonin receptor-stimulating peptide 2 (CRSP2) from Capra hircus (Goat).